The sequence spans 283 residues: Undecaprenyl-diphosphatase (283 aa).

A run of 6 helical transmembrane segments spans residues 47 to 67 (PGLS…IAYF), 94 to 114 (LGIA…CIKL), 127 to 147 (VPAI…AELL), 197 to 217 (AARF…LVEL), 227 to 247 (GGVL…WLAI), and 261 to 281 (IFVV…SGSA).

Belongs to the UppP family.

It localises to the cell inner membrane. It catalyses the reaction di-trans,octa-cis-undecaprenyl diphosphate + H2O = di-trans,octa-cis-undecaprenyl phosphate + phosphate + H(+). In terms of biological role, catalyzes the dephosphorylation of undecaprenyl diphosphate (UPP). Confers resistance to bacitracin. This is Undecaprenyl-diphosphatase from Synechococcus sp. (strain CC9311).